The sequence spans 103 residues: Cell division topological specificity factor (103 aa).

Belongs to the MinE family.

Prevents the cell division inhibition by proteins MinC and MinD at internal division sites while permitting inhibition at polar sites. This ensures cell division at the proper site by restricting the formation of a division septum at the midpoint of the long axis of the cell. This is Cell division topological specificity factor from Prochlorococcus marinus (strain MIT 9211).